Reading from the N-terminus, the 606-residue chain is DNA mismatch repair protein MutL (606 aa).

The tract at residues 350–371 (GWRPSAPSAPWTPEASPSRPYQ) is disordered.

The protein belongs to the DNA mismatch repair MutL/HexB family.

Its function is as follows. This protein is involved in the repair of mismatches in DNA. It is required for dam-dependent methyl-directed DNA mismatch repair. May act as a 'molecular matchmaker', a protein that promotes the formation of a stable complex between two or more DNA-binding proteins in an ATP-dependent manner without itself being part of a final effector complex. In Rhizobium rhizogenes (strain K84 / ATCC BAA-868) (Agrobacterium radiobacter), this protein is DNA mismatch repair protein MutL.